We begin with the raw amino-acid sequence, 513 residues long: Histidine ammonia-lyase (513 aa).

The 5-imidazolinone (Ala-Gly) cross-link spans 143-145 (ASG). Residue serine 144 is modified to 2,3-didehydroalanine (Ser).

This sequence belongs to the PAL/histidase family. Contains an active site 4-methylidene-imidazol-5-one (MIO), which is formed autocatalytically by cyclization and dehydration of residues Ala-Ser-Gly.

It is found in the cytoplasm. The enzyme catalyses L-histidine = trans-urocanate + NH4(+). It functions in the pathway amino-acid degradation; L-histidine degradation into L-glutamate; N-formimidoyl-L-glutamate from L-histidine: step 1/3. The chain is Histidine ammonia-lyase from Xanthomonas axonopodis pv. citri (strain 306).